Here is a 293-residue protein sequence, read N- to C-terminus: Ribonuclease HIII (293 aa).

The RNase H type-2 domain maps to 78–293 (LPLIGTDEVG…TEKAKKRLER (216 aa)). 3 residues coordinate a divalent metal cation: D84, E85, and D187.

Belongs to the RNase HII family. RnhC subfamily. Mn(2+) is required as a cofactor. Requires Mg(2+) as cofactor.

It localises to the cytoplasm. The enzyme catalyses Endonucleolytic cleavage to 5'-phosphomonoester.. Its function is as follows. Endonuclease that specifically degrades the RNA of RNA-DNA hybrids. The chain is Ribonuclease HIII from Streptococcus pneumoniae serotype 19F (strain G54).